The primary structure comprises 140 residues: Large ribosomal subunit protein uL16 (140 aa).

A compositionally biased stretch (basic residues) spans Met-1–Lys-14. Residues Met-1–Thr-20 form a disordered region.

It belongs to the universal ribosomal protein uL16 family. In terms of assembly, part of the 50S ribosomal subunit.

Its function is as follows. Binds 23S rRNA and is also seen to make contacts with the A and possibly P site tRNAs. This is Large ribosomal subunit protein uL16 from Geotalea daltonii (strain DSM 22248 / JCM 15807 / FRC-32) (Geobacter daltonii).